The sequence spans 1691 residues: ADAMTS-like protein 3 (1691 aa).

The first 26 residues, 1 to 26 (MASWTSPWWVLIGMVFMHSPLPQTTA), serve as a signal peptide directing secretion. Residues 75-124 (DGNWDAWGDWSDCSRTCGGGASYSLRRCLTGRNCEGQNIRYKTCSNHDCP) form the TSP type-1 1 domain. Intrachain disulfides connect Cys87-Cys118, Cys91-Cys123, and Cys102-Cys108. Asn293 carries N-linked (GlcNAc...) asparagine glycosylation. 3 TSP type-1 domains span residues 418 to 468 (PLPR…APKP), 478 to 535 (DCPK…IPCY), and 564 to 626 (EEPT…EACD). Intrachain disulfides connect Cys576–Cys620, Cys580–Cys625, and Cys591–Cys609. An N-linked (GlcNAc...) asparagine glycan is attached at Asn681. TSP type-1 domains are found at residues 703-760 (CPPR…FDCP), 763-818 (WHIE…ARTD), and 819-881 (CPPH…PECS). Asn797 is a glycosylation site (N-linked (GlcNAc...) asparagine). Intrachain disulfides connect Cys831–Cys875, Cys835–Cys880, and Cys846–Cys863. Positions 896-992 (PQILSVQRVY…IAGSAQETVV (97 aa)) constitute an Ig-like C2-type 1 domain. Asn915 and Asn927 each carry an N-linked (GlcNAc...) asparagine glycan. Cys934 and Cys982 are oxidised to a cystine. An N-linked (GlcNAc...) asparagine glycan is attached at Asn1102. The segment at 1146-1184 (PPAAQLRGETGSVSQSSHAKNSGKLTFKPKGPVLMRQSQ) is disordered. Residues 1156–1169 (GSVSQSSHAKNSGK) show a composition bias toward polar residues. An Ig-like C2-type 2 domain is found at 1185 to 1279 (PPSISFNKTI…GSDVESSSVL (95 aa)). The N-linked (GlcNAc...) asparagine glycan is linked to Asn1191. A disulfide bridge connects residues Cys1215 and Cys1263. Asn1292, Asn1316, Asn1330, Asn1343, Asn1349, Asn1356, Asn1432, Asn1516, Asn1574, and Asn1591 each carry an N-linked (GlcNAc...) asparagine glycan. Residues 1296 to 1378 (PEHNHLSVVV…ATNALGKAVA (83 aa)) enclose the Ig-like C2-type 3 domain. Cys1321 and Cys1367 are joined by a disulfide. 2 TSP type-1 domains span residues 1424-1482 (QEPF…NIRD) and 1483-1545 (CPAR…HPCV). The region spanning 1597 to 1644 (CDVCWHTGPWKPCTAACGRGFQSRKVDCIHTRSCKPVAKRHCVQKKKP) is the TSP type-1 10 domain. A PLAC domain is found at 1655–1691 (CDRDCTDTTHYCMFVKHLNLCSLDRYKQRCCQSCQEG).

In terms of processing, glycosylated. Can be O-fucosylated by POFUT2 on a serine or a threonine residue found within the consensus sequence C1-X(2)-(S/T)-C2-G of the TSP type-1 repeat domains where C1 and C2 are the first and second cysteine residue of the repeat, respectively. Fucosylated repeats can then be further glycosylated by the addition of a beta-1,3-glucose residue by the glucosyltransferase, B3GALTL. Fucosylation mediates the efficient secretion of ADAMTS family members. Can also be C-glycosylated with one or two mannose molecules on tryptophan residues within the consensus sequence W-X-X-W of the TPRs, and N-glycosylated. These other glycosylations can also facilitate secretion. In terms of tissue distribution, expressed in epithelial cells of the colon, fallopian tube, skin, breast, prostate, epididymis, liver, pancreatic islets and bile ducts, as well as by vascular endothelial cells, smooth muscle cells, fibroblasts, cortical and ganglionic neurons and cardiac myocytes. Also expressed by malignant epithelial cells in colon cancer, as well as breast, prostate, renal and skin tumors. Expression is significantly reduced in colon cancer compared to normal colon.

Its subcellular location is the secreted. The protein localises to the extracellular space. The protein resides in the extracellular matrix. The chain is ADAMTS-like protein 3 (ADAMTSL3) from Homo sapiens (Human).